Reading from the N-terminus, the 484-residue chain is Phosphomevalonate kinase erg8 (484 aa).

The disordered stretch occupies residues Arg54–Asp77. Ala184–Ala194 is a binding site for ATP.

This sequence belongs to the GHMP kinase family. Mevalonate kinase subfamily.

The catalysed reaction is (R)-5-phosphomevalonate + ATP = (R)-5-diphosphomevalonate + ADP. The protein operates within isoprenoid biosynthesis; isopentenyl diphosphate biosynthesis via mevalonate pathway; isopentenyl diphosphate from (R)-mevalonate: step 2/3. In terms of biological role, phosphomevalonate kinase; part of the second module of ergosterol biosynthesis pathway that includes the middle steps of the pathway. Erg8 converts 5-phosphomevalonate to 5-diphosphomevalonate. The second module is carried out in the vacuole and involves the formation of farnesyl diphosphate, which is also an important intermediate in the biosynthesis of ubiquinone, dolichol, heme and prenylated proteins. Activity by the mevalonate kinase erg12 (AFUA_4G07780) first converts mevalonate into 5-phosphomevalonate. 5-phosphomevalonate is then further converted to 5-diphosphomevalonate by the phosphomevalonate kinase erg8 (AFUA_5G10680). The diphosphomevalonate decarboxylase mvd1 (AFUA_4G07130) then produces isopentenyl diphosphate. The isopentenyl-diphosphate delta-isomerase idi1 (AFUA_6G11160) then catalyzes the 1,3-allylic rearrangement of the homoallylic substrate isopentenyl (IPP) to its highly electrophilic allylic isomer, dimethylallyl diphosphate (DMAPP). Finally the farnesyl diphosphate synthase erg20 (AFUA_5G02450) catalyzes the sequential condensation of isopentenyl pyrophosphate with dimethylallyl pyrophosphate, and then with the resultant geranylpyrophosphate to the ultimate product farnesyl pyrophosphate. This Aspergillus fumigatus (strain ATCC MYA-4609 / CBS 101355 / FGSC A1100 / Af293) (Neosartorya fumigata) protein is Phosphomevalonate kinase erg8.